Here is a 379-residue protein sequence, read N- to C-terminus: 2-nitroimidazole nitrohydrolase (379 aa).

Cysteine 357 acts as the Amidino-cysteine intermediate in catalysis.

This sequence belongs to the arginine deiminase family.

The enzyme catalyses 2-nitroimidazole + H2O = 1,3-dihydro-2H-imidazol-2-one + nitrite + H(+). Its function is as follows. Involved in the biodegradation of 2-Nitroimidazole (2NI) which is a natural antibiotic and an analog of the synthetic nitroimidazoles used for treatment of tuberculosis, Chagas disease (also called American Trypanosomiasis) and cancer. Catalyzes the hydrolytic denitration of 2NI to produce imidazol-2-one and nitrite. It is also active against the 2NI synthetic derivative benznidazole. NnhA confers drug resistance to 2NI. This is 2-nitroimidazole nitrohydrolase (nnhA) from Mycobacterium sp. (strain JS330).